Here is a 545-residue protein sequence, read N- to C-terminus: MNCSAFSFWFVCKIIFFFLSFHIQISIANPRENFLKCFSKHIPNNVANPKLVYTQHDQLYMSILNSTIQNLRFISDTTPKPLVIVTPSNNSHIQATILCSKKVGLQIRTRSGGHDAEGMSYISQVPFVVVDLRNMHSIKIDVHSQTAWVEAGATLGEVYYWINEKNENLSFPGGYCPTVGVGGHFSGGGYGALMRNYGLAADNIIDAHLVNVDGKVLDRKSMGEDLFWAIRGGGGENFGIIAAWKIKLVAVPSKSTIFSVKKNMEIHGLVKLFNKWQNIAYKYDKDLVLMTHFITKNITDNHGKNKTTVHGYFSSIFHGGVDSLVDLMNKSFPELGIKKTDCKEFSWIDTTIFYSGVVNFNTANFKKEILLDRSAGKKTAFSIKLDYVKKPIPETAMVKILEKLYEEDVGAGMYVLYPYGGIMEEISESAIPFPHRAGIMYELWYTASWEKQEDNEKHINWVRSVYNFTTPYVSQNPRLAYLNYRDLDLGKTNHASPNNYTQARIWGEKYFGKNFNRLVKVKTKVDPNNFFRNEQSIPPLPPHHH.

An N-terminal signal peptide occupies residues 1–28; the sequence is MNCSAFSFWFVCKIIFFFLSFHIQISIA. The cysteines at positions 37 and 99 are disulfide-linked. N-linked (GlcNAc...) asparagine glycosylation is found at N65 and N89. Residues 77-251 enclose the FAD-binding PCMH-type domain; that stretch reads TTPKPLVIVT…AAWKIKLVAV (175 aa). Residues 109-115 and S120 each bind FAD; that span reads TRSGGHD. Residues 114–176 constitute a cross-link (6-(S-cysteinyl)-8alpha-(pros-histidyl)-FAD (His-Cys)); it reads HDAEGMSYIS…ENLSFPGGYC (63 aa). N-linked (GlcNAc...) asparagine glycosylation is present at N168. FAD-binding positions include C176, 180 to 184, Y190, E236, and I241; that span reads GVGGH. H292 provides a ligand contact to cannabigerolate. N297, N305, and N329 each carry an N-linked (GlcNAc...) asparagine glycan. The cannabigerolate site is built by Y417 and E442. N467 is a glycosylation site (N-linked (GlcNAc...) asparagine). 481 to 483 lines the FAD pocket; the sequence is YLN. Y484 functions as the Proton acceptor in the catalytic mechanism. N-linked (GlcNAc...) asparagine glycosylation is present at N499.

Belongs to the oxygen-dependent FAD-linked oxidoreductase family. Monomer. It depends on FAD as a cofactor. Post-translationally, glycosylated when produced in a heterologous system. The deglycosylated THCA synthase has more catalytic activity than the glycosylated form. In terms of processing, the FAD cofactor is bound via a bicovalent 6-S-cysteinyl, 8alpha-N1-histidyl FAD linkage. Expressed in the secretory cells of glandular trichomes.

It is found in the secreted. It localises to the extracellular space. The protein resides in the apoplast. It carries out the reaction cannabigerolate + O2 = Delta(9)-tetrahydrocannabinolate + H2O2. It participates in secondary metabolite biosynthesis; terpenoid biosynthesis. Its activity is regulated as follows. Inhibited by Hg(2+). Its function is as follows. Oxidoreductase involved in the biosynthesis of cannabinoids-related terpenophenolic natural products, which have pharmacological activity. Catalyzes the oxidative cyclization of the monoterpene moiety in cannabigerolic acid (CBGA), producing delta(9)-tetrahydrocannabinolate (THCA), the major cannabioid in drug-type Cannabis plants. Can also use cannabinerolic acid as substrate, but not cannabigerol or cannabinerol. The chain is Tetrahydrocannabinolic acid synthase from Cannabis sativa (Hemp).